The chain runs to 129 residues: L-ectoine synthase (129 aa).

The protein belongs to the ectoine synthase family.

The catalysed reaction is (2S)-4-acetamido-2-aminobutanoate = L-ectoine + H2O. The protein operates within amine and polyamine biosynthesis; ectoine biosynthesis; L-ectoine from L-aspartate 4-semialdehyde: step 3/3. Catalyzes the circularization of gamma-N-acetyl-alpha,gamma-diaminobutyric acid (ADABA) to ectoine (1,4,5,6-tetrahydro-2-methyl-4-pyrimidine carboxylic acid), which is an excellent osmoprotectant. This Desulfosudis oleivorans (strain DSM 6200 / JCM 39069 / Hxd3) (Desulfococcus oleovorans) protein is L-ectoine synthase.